Reading from the N-terminus, the 348-residue chain is GMP reductase 2 (348 aa).

NADP(+) is bound by residues 26–27 (SR), lysine 78, 129–131 (DVA), and 180–181 (IG). Glycine 181, glycine 183, and cysteine 186 together coordinate K(+). Cysteine 186 acts as the Thioimidate intermediate in catalysis. Threonine 188 serves as the catalytic Proton donor/acceptor. Arginine 189 contributes to the K(+) binding site. GMP-binding positions include 219 to 221 (DGG), 242 to 243 (GG), 268 to 270 (GMS), and 286 to 290 (RASEG). Residues methionine 269 and 285 to 286 (YR) each bind NADP(+). Lysine 291 is modified (N6-acetyllysine). 314 to 317 (STCT) is an NADP(+) binding site.

The protein belongs to the IMPDH/GMPR family. GuaC type 1 subfamily. Homotetramer.

The catalysed reaction is IMP + NH4(+) + NADP(+) = GMP + NADPH + 2 H(+). Catalyzes the irreversible NADPH-dependent deamination of GMP to IMP. It functions in the conversion of nucleobase, nucleoside and nucleotide derivatives of G to A nucleotides, and in maintaining the intracellular balance of A and G nucleotides. Plays a role in modulating cellular differentiation. This chain is GMP reductase 2, found in Mus musculus (Mouse).